Reading from the N-terminus, the 132-residue chain is UPF0201 protein MTH_433 (132 aa).

This sequence belongs to the UPF0201 family.

The sequence is that of UPF0201 protein MTH_433 from Methanothermobacter thermautotrophicus (strain ATCC 29096 / DSM 1053 / JCM 10044 / NBRC 100330 / Delta H) (Methanobacterium thermoautotrophicum).